Here is a 161-residue protein sequence, read N- to C-terminus: E3 ubiquitin ligase complex SCF subunit sconC (161 aa).

Residues 103–161 (ILAANYLDIKGLLDVGCKTVANMIKGKSPEEIRKTFNIQNDFTPEEEDQIRRENEWAEE) form an interaction with the F-box domain of F-box proteins region.

Belongs to the SKP1 family. Component of the SCF (SKP1-CUL1-F-box protein) E3 ubiquitin ligase complexes.

It functions in the pathway protein modification; protein ubiquitination. Functionally, essential component of the SCF (SKP1-CUL1-F-box protein) E3 ubiquitin ligase complexes, which mediate the ubiquitination and subsequent proteasomal degradation of target proteins. Controls sulfur metabolite repression, probably by mediating the inactivation or degradation of the metR transcription factor. The polypeptide is E3 ubiquitin ligase complex SCF subunit sconC (sconC) (Aspergillus terreus (strain NIH 2624 / FGSC A1156)).